Here is a 633-residue protein sequence, read N- to C-terminus: Biosynthetic arginine decarboxylase (633 aa).

The residue at position 101 (K101) is an N6-(pyridoxal phosphate)lysine. 284–294 is a binding site for substrate; sequence VDVGGGLGVDY.

It belongs to the Orn/Lys/Arg decarboxylase class-II family. SpeA subfamily. Mg(2+) serves as cofactor. It depends on pyridoxal 5'-phosphate as a cofactor.

It catalyses the reaction L-arginine + H(+) = agmatine + CO2. Its pathway is amine and polyamine biosynthesis; agmatine biosynthesis; agmatine from L-arginine: step 1/1. Its function is as follows. Catalyzes the biosynthesis of agmatine from arginine. The protein is Biosynthetic arginine decarboxylase of Aeromonas salmonicida (strain A449).